The following is a 341-amino-acid chain: Cysteine and histidine-rich domain-containing protein 1 (341 aa).

The Zn(2+) site is built by C5, C10, C24, H27, C42, C43, C59, H64, C155, C160, C174, H177, C192, C193, C209, and H214. 2 CHORD domains span residues 5–64 and 155–214; these read CYNK…KGPH and CKNG…RGKH. Residues 61-81 form a disordered region; the sequence is KGPHNQEKPAEPVKPEVKSSL. Positions 64–81 are enriched in basic and acidic residues; sequence HNQEKPAEPVKPEVKSSL. The region spanning 225–314 is the CS domain; that stretch reads VVPCRFDWHQ…AEPMSWARLD (90 aa). Positions 313-341 are disordered; sequence LDLPPVAPPKEKEKEKDVDSEDECDDDED. Over residues 330–341 the composition is skewed to acidic residues; the sequence is VDSEDECDDDED.

Its function is as follows. Regulates centrosome duplication. The polypeptide is Cysteine and histidine-rich domain-containing protein 1 (chordc1) (Danio rerio (Zebrafish)).